A 245-amino-acid polypeptide reads, in one-letter code: MIIPALDLIDGKVVRLHQGDYAQQRDYQHDPLSHFQQYEQQGAKLLHLVDLTGAKDPSARQIPLLRKLLAAVSIPVQVGGGIRTEEDVKTLLDAGANRIVIGSIAIKQPALVTQWFKRYGAENIVLALDVRINDTGMKQVAINGWQENSSVTLEQVIEQYLPCGLKYVLCTDISRDGTLTGSNVELYRAICQYYPQIVFQASGGIGTLNDIASLPTSGVAGVIIGRALLDEKFTLKEAIQCWQNA.

The active-site Proton acceptor is D7. D129 functions as the Proton donor in the catalytic mechanism.

Belongs to the HisA/HisF family.

Its subcellular location is the cytoplasm. The enzyme catalyses 1-(5-phospho-beta-D-ribosyl)-5-[(5-phospho-beta-D-ribosylamino)methylideneamino]imidazole-4-carboxamide = 5-[(5-phospho-1-deoxy-D-ribulos-1-ylimino)methylamino]-1-(5-phospho-beta-D-ribosyl)imidazole-4-carboxamide. The protein operates within amino-acid biosynthesis; L-histidine biosynthesis; L-histidine from 5-phospho-alpha-D-ribose 1-diphosphate: step 4/9. This chain is 1-(5-phosphoribosyl)-5-[(5-phosphoribosylamino)methylideneamino] imidazole-4-carboxamide isomerase 1 (hisA1), found in Photorhabdus laumondii subsp. laumondii (strain DSM 15139 / CIP 105565 / TT01) (Photorhabdus luminescens subsp. laumondii).